We begin with the raw amino-acid sequence, 314 residues long: Phosphoribosylaminoimidazole-succinocarboxamide synthase (314 aa).

Belongs to the SAICAR synthetase family.

The enzyme catalyses 5-amino-1-(5-phospho-D-ribosyl)imidazole-4-carboxylate + L-aspartate + ATP = (2S)-2-[5-amino-1-(5-phospho-beta-D-ribosyl)imidazole-4-carboxamido]succinate + ADP + phosphate + 2 H(+). Its pathway is purine metabolism; IMP biosynthesis via de novo pathway; 5-amino-1-(5-phospho-D-ribosyl)imidazole-4-carboxamide from 5-amino-1-(5-phospho-D-ribosyl)imidazole-4-carboxylate: step 1/2. This chain is Phosphoribosylaminoimidazole-succinocarboxamide synthase, found in Bacteroides fragilis (strain ATCC 25285 / DSM 2151 / CCUG 4856 / JCM 11019 / LMG 10263 / NCTC 9343 / Onslow / VPI 2553 / EN-2).